A 394-amino-acid polypeptide reads, in one-letter code: GDP-mannose transporter (394 aa).

At M1–G56 the chain is on the cytoplasmic side. Residues A57 to V77 traverse the membrane as a helical segment. Residues S78–S81 lie on the Lumenal side of the membrane. Residues W82 to L102 form a helical membrane-spanning segment. The Cytoplasmic portion of the chain corresponds to S103–R122. The helical transmembrane segment at W123–S145 threads the bilayer. Topologically, residues V146–T150 are lumenal. Residues I151 to F168 traverse the membrane as a helical segment. The Cytoplasmic segment spans residues G169–P174. Residues L175–I199 traverse the membrane as a helical segment. The Lumenal segment spans residues D200–E207. Residues T208 to C228 traverse the membrane as a helical segment. The Cytoplasmic segment spans residues T229 to D249. The chain crosses the membrane as a helical span at residues S250 to E270. Residues D271–K288 are Lumenal-facing. A helical transmembrane segment spans residues L289 to W309. Topologically, residues C310–T317 are cytoplasmic. Residues T318–F338 form a helical membrane-spanning segment. At D339 to P341 the chain is on the lumenal side. The chain crosses the membrane as a helical span at residues I342–W362. Topologically, residues A363–S394 are cytoplasmic.

It belongs to the TPT transporter family. SLC35D subfamily. In terms of assembly, homooligomer.

Its subcellular location is the golgi apparatus membrane. It localises to the cytoplasmic vesicle membrane. The protein localises to the endoplasmic reticulum membrane. Involved in the import of GDP-mannose from the cytoplasm into the Golgi lumen. The protein is GDP-mannose transporter (VRG4) of Chaetomium globosum (strain ATCC 6205 / CBS 148.51 / DSM 1962 / NBRC 6347 / NRRL 1970) (Soil fungus).